A 787-amino-acid chain; its full sequence is Disease resistance protein ADR1 (787 aa).

Positions 1 to 149 (MASFIDLFAG…LLTERNDSLS (149 aa)) constitute an RPW8 domain. The stretch at 96 to 112 (HANKMKDLEKQISRFLN) forms a coiled coil. 193 to 200 (GMSGSGKT) is a binding site for ATP. Residues 247–414 (HQRKLVILDD…PLDLLTSVWV (168 aa)) enclose the NB-ARC domain. 4 LRR repeats span residues 549–575 (MSRLRVLVIINNGMSPARLHGFSIFAN), 576–599 (LAKLRSLWLKRVHVPELTSCTIPL), 650–674 (ITSLNSLSITNCPRILELPKNLSNV), and 722–745 (LGSLEKIDMRECSLLGLPSSVAAL).

This sequence belongs to the disease resistance NB-LRR family.

Disease resistance (R) protein that mediates resistance against Hyaloperonospora parasitica in a salicylic acid-dependent manner. Also mediates resistance against Erysiphe cichoracearum is both salicylic acid-dependent and partially NPR1-dependent. Resistance proteins guard the plant against pathogens that contain an appropriate avirulence protein via an indirect interaction with this avirulence protein. That triggers a defense system including the hypersensitive response, which restricts the pathogen growth. This Arabidopsis thaliana (Mouse-ear cress) protein is Disease resistance protein ADR1 (ADR1).